Here is a 558-residue protein sequence, read N- to C-terminus: TNF receptor-associated factor 5 (558 aa).

The segment at 45–85 (CAFCHSVLHNPHQTGCGHRFCQQCIRSLRELNSVPICPVDK) adopts an RING-type zinc-finger fold. 2 TRAF-type zinc fingers span residues 127–181 (DHLQ…TNLQ) and 182–239 (DHEE…GNLL). Residues 252 to 302 (LVLEKNYQLEQRISDLYQSLEQKESKIQQLAETVKKFEKELKQFTQMFGRN) are a coiled coil. A Glycyl lysine isopeptide (Lys-Gly) (interchain with G-Cter in ubiquitin) cross-link involves residue lysine 318. The stretch at 340–400 (LDLRSLVDAV…EERFKQLEGA (61 aa)) forms a coiled coil. The interval 345–558 (LVDAVDSVKQ…AVDLTDLEDL (214 aa)) is interaction with EIF2AK2/PKR. The 148-residue stretch at 403-550 (SGKLIWKVTD…DDTLFLKVAV (148 aa)) folds into the MATH domain.

Belongs to the TNF receptor-associated factor family. A subfamily. As to quaternary structure, homotrimer. Heterotrimer with TRAF3. Associates with TNFRSF5/CD40 through interaction with TRAF3. Associates with LTBR/TNFRSF3, TNFRSF4, TNFRSF8/CD30, TNFRSF11A/RANK, TNFRSF13B/TACI, TNFRSF14, TNFRSF17, TNFRSF19/TROY, RIPK2, MAP3K14, MAP3K5, and TRAF and TNF receptor associated protein TDP2. Interacts (via C-terminus) with EIF2AK2/PKR (via the kinase catalytic domain). In terms of processing, ubiquitinated at Lys-318 by the SCF(FBXL2) complex, leading to its degradation by the proteasome.

It localises to the cytoplasm. The protein resides in the cytosol. Functionally, adapter protein and signal transducer that links members of the tumor necrosis factor receptor family to different signaling pathways by association with the receptor cytoplasmic domain and kinases. Mediates activation of NF-kappa-B and probably JNK. Seems to be involved in apoptosis. Plays a role in mediating activation of NF-kappa-B by EIF2AK2/PKR. The polypeptide is TNF receptor-associated factor 5 (Traf5) (Mus musculus (Mouse)).